The primary structure comprises 1350 residues: Nidogen (1350 aa).

The signal sequence occupies residues 1–22 (MPTFGSKLLACLLLSSVILVSG). Residues 107–260 (AFYSNVDTSF…GVWLFEVAPI (154 aa)) enclose the NIDO domain. Residue asparagine 231 is glycosylated (N-linked (GlcNAc...) asparagine). The EGF-like 1 domain occupies 281–321 (LALSCQAHAHQCHEKAECHDKAEGYCCVCGSGFYGNGKSCL). Disulfide bonds link cysteine 285–cysteine 298, cysteine 292–cysteine 307, and cysteine 309–cysteine 320. The Nidogen G2 beta-barrel domain occupies 325–550 (QPIRVTGTLT…GVTPESNACN (226 aa)). N-linked (GlcNAc...) asparagine glycans are attached at residues asparagine 423 and asparagine 480. The EGF-like 2 domain maps to 545 to 583 (ESNACNDGTADCVENSVCVPYEDTYRCDCYHGFAAQLDE). 5 disulfides stabilise this stretch: cysteine 549/cysteine 562, cysteine 556/cysteine 571, cysteine 595/cysteine 608, cysteine 602/cysteine 617, and cysteine 619/cysteine 630. Positions 591-631 (DIDECATGSHVCDENAVCDNTEGGFNCYCTEGFEGNGYRCL) constitute an EGF-like 3; calcium-binding domain. The N-linked (GlcNAc...) asparagine glycan is linked to asparagine 633. Residues 645 to 691 (VEGQAEPTSEPSPNPSPYPDQGQDQEREREDDQYPQPNPYPYPEEQI) are disordered. EGF-like domains are found at residues 788–829 (DLIP…YNCD), 832–874 (SDDS…FNCQ), 912–953 (PAGR…TGCT), 955–996 (KPLS…YVCI), and 997–1037 (EEQN…SLCQ). 15 disulfides stabilise this stretch: cysteine 792-cysteine 804, cysteine 798-cysteine 815, cysteine 817-cysteine 828, cysteine 836-cysteine 849, cysteine 843-cysteine 860, cysteine 862-cysteine 873, cysteine 916-cysteine 927, cysteine 921-cysteine 938, cysteine 940-cysteine 952, cysteine 959-cysteine 971, cysteine 965-cysteine 982, cysteine 984-cysteine 995, cysteine 1001-cysteine 1014, cysteine 1008-cysteine 1023, and cysteine 1025-cysteine 1036. Asparagine 801 is a glycosylation site (N-linked (GlcNAc...) asparagine). Asparagine 1032 carries N-linked (GlcNAc...) asparagine glycosylation. LDL-receptor class B repeat units lie at residues 1084 to 1126 (GRVY…DVIS), 1127 to 1170 (RRLY…DPYR), 1171 to 1216 (EKLF…LENS), and 1257 to 1282 (DQFY…QTPI).

In terms of tissue distribution, expressed in the basement membrane around the follicular epithelium of the adult ovary (at protein level).

Its subcellular location is the secreted. The protein localises to the extracellular space. It localises to the extracellular matrix. The protein resides in the basement membrane. Functionally, cell adhesion glycoprotein which is widely distributed in basement membranes. Involved in cell-extracellular matrix (ECM) interactions probably by connecting the laminin and collagen IV networks. Required for permeability and mechanical stability of basement membranes, and ECM dependent neural plasticity. Not involved in assembly of the embryonic basement membrane. In Drosophila melanogaster (Fruit fly), this protein is Nidogen.